Consider the following 155-residue polypeptide: Regulatory protein RecX (155 aa).

It belongs to the RecX family.

It is found in the cytoplasm. Modulates RecA activity. This Pseudomonas savastanoi pv. phaseolicola (strain 1448A / Race 6) (Pseudomonas syringae pv. phaseolicola (strain 1448A / Race 6)) protein is Regulatory protein RecX.